A 105-amino-acid chain; its full sequence is Small ribosomal subunit protein uS10 (105 aa).

Belongs to the universal ribosomal protein uS10 family. Part of the 30S ribosomal subunit.

Its function is as follows. Involved in the binding of tRNA to the ribosomes. This is Small ribosomal subunit protein uS10 from Rickettsia akari (strain Hartford).